The sequence spans 389 residues: Chalcone synthase 4-2 (389 aa).

Cys164 is a catalytic residue.

The protein belongs to the thiolase-like superfamily. Chalcone/stilbene synthases family.

The enzyme catalyses (E)-4-coumaroyl-CoA + 3 malonyl-CoA + 3 H(+) = 2',4,4',6'-tetrahydroxychalcone + 3 CO2 + 4 CoA. The protein operates within secondary metabolite biosynthesis; flavonoid biosynthesis. The primary product of this enzyme is 4,2',4',6'-tetrahydroxychalcone (also termed naringenin-chalcone or chalcone) which can under specific conditions spontaneously isomerize into naringenin. In Medicago sativa (Alfalfa), this protein is Chalcone synthase 4-2 (CHS4-2).